The following is a 62-amino-acid chain: Alpha-elapitoxin-Nn2a (62 aa).

Positions 1–20 (LECHNQQSSQTPTTTDCSGG) are disordered. 4 disulfides stabilise this stretch: C3–C24, C17–C41, C43–C54, and C55–C60.

It belongs to the three-finger toxin family. Short-chain subfamily. Type I alpha-neurotoxin sub-subfamily. As to expression, expressed by the venom gland.

It localises to the secreted. Its function is as follows. Nicotinic acetylcholine receptor antagonist. Binds to muscle nicotinic acetylcholine receptor (nAChR) and inhibits acetylcholine from binding to the receptor, thereby impairing neuromuscular transmission. Produces peripheral paralysis by blocking neuromuscular transmission at the postsynaptic site. Induces concentration-dependent inhibition of indirect twitches and abolishes contractile responses of tissues to exogenous acetylcholine and carbachol, in the chick biventer cervicis nerve-muscle preparation at 100-300 nM (in vitro). Prior incubation of tissues with Indian polyvalent antivenom (1 ml/0.6 mg) prevents the neurotoxic effects at 100 nM (in vitro). Addition of Indian polyvalent antivenom (1 ml/0.6 mg) at the t90 time point does not reverse the neurotoxic effects (in vitro). Displays non-competitive antagonism of concentration-response curves to carbachol, with a pA2 of 8.01 (in vitro). In Naja naja (Indian cobra), this protein is Alpha-elapitoxin-Nn2a.